The following is a 238-amino-acid chain: 5-amino-6-(5-phospho-D-ribitylamino)uracil phosphatase YigB (238 aa).

D16 acts as the Nucleophile in catalysis. 3 residues coordinate Mg(2+): D16, D18, and D188. A substrate-binding site is contributed by 16-18 (DLD).

Belongs to the HAD-like hydrolase superfamily. Mg(2+) is required as a cofactor. The cofactor is Mn(2+). Co(2+) serves as cofactor. It depends on Zn(2+) as a cofactor.

The enzyme catalyses 5-amino-6-(5-phospho-D-ribitylamino)uracil + H2O = 5-amino-6-(D-ribitylamino)uracil + phosphate. The protein operates within cofactor biosynthesis; riboflavin biosynthesis; 5-amino-6-(D-ribitylamino)uracil from GTP: step 4/4. Its function is as follows. Catalyzes the dephosphorylation of 5-amino-6-(5-phospho-D-ribitylamino)uracil, and thus could be involved in the riboflavin biosynthesis pathway. Is also able to dephosphorylate flavin mononucleotide (FMN) and other phosphoric acid esters. YigB is important for the formation of dormant persister cells. The chain is 5-amino-6-(5-phospho-D-ribitylamino)uracil phosphatase YigB (yigB) from Escherichia coli (strain K12).